The chain runs to 175 residues: MTRAPLNVLLRRVDPDVPLPAYEHPGDAGADLRTTESCELKPGERAVLPTGVSVALPEGYAAFVHPRSGLAARCGVALVNAPGTVDAGYRGEIKVIVVNLDPRESVRFERFDRIAQLVVQQVERVRFQEVAELPDSARAEGGFGSTGGHAAVGADTNGQQGGNRYASVVSDRKGQ.

Substrate contacts are provided by residues 67 to 69, Asn80, 84 to 86, and Lys94; these read RSG and TVD. The tract at residues 138-175 is disordered; that stretch reads RAEGGFGSTGGHAAVGADTNGQQGGNRYASVVSDRKGQ.

The protein belongs to the dUTPase family. Requires Mg(2+) as cofactor.

It catalyses the reaction dUTP + H2O = dUMP + diphosphate + H(+). Its pathway is pyrimidine metabolism; dUMP biosynthesis; dUMP from dCTP (dUTP route): step 2/2. This enzyme is involved in nucleotide metabolism: it produces dUMP, the immediate precursor of thymidine nucleotides and it decreases the intracellular concentration of dUTP so that uracil cannot be incorporated into DNA. This is Deoxyuridine 5'-triphosphate nucleotidohydrolase from Streptomyces avermitilis (strain ATCC 31267 / DSM 46492 / JCM 5070 / NBRC 14893 / NCIMB 12804 / NRRL 8165 / MA-4680).